The primary structure comprises 136 residues: MSSDSFQRQLVQRTNTLNSSIDNATLTILSRFQDILDIAINEGKDKYTVAPEVYQIECHTVSMVRAVEQLLDVSRQIKSYWLTNSLSTSFPTVDYSEPDLEKVKRTLTKLQNHLLEVSLIEPEASETTEAPTVSDT.

Belongs to the Mediator complex subunit 22 family. Component of the Mediator complex.

The protein resides in the nucleus. In terms of biological role, component of the Mediator complex, a coactivator involved in the regulated transcription of nearly all RNA polymerase II-dependent genes. Mediator functions as a bridge to convey information from gene-specific regulatory proteins to the basal RNA polymerase II transcription machinery. Mediator is recruited to promoters by direct interactions with regulatory proteins and serves as a scaffold for the assembly of a functional preinitiation complex with RNA polymerase II and the general transcription factors. In Schizosaccharomyces pombe (strain 972 / ATCC 24843) (Fission yeast), this protein is Mediator of RNA polymerase II transcription subunit 22 (med22).